The chain runs to 426 residues: Dihydroorotase (426 aa).

Zn(2+) is bound by residues His62 and His64. Residues 64–66 (HLR) and Asn96 contribute to the substrate site. Residues Asp154, His181, His234, and Asp307 each coordinate Zn(2+). Asp307 is an active-site residue. His311 is a binding site for substrate.

It belongs to the metallo-dependent hydrolases superfamily. DHOase family. Class I DHOase subfamily. It depends on Zn(2+) as a cofactor.

The enzyme catalyses (S)-dihydroorotate + H2O = N-carbamoyl-L-aspartate + H(+). The protein operates within pyrimidine metabolism; UMP biosynthesis via de novo pathway; (S)-dihydroorotate from bicarbonate: step 3/3. Catalyzes the reversible cyclization of carbamoyl aspartate to dihydroorotate. The sequence is that of Dihydroorotase from Syntrophus aciditrophicus (strain SB).